A 404-amino-acid polypeptide reads, in one-letter code: Cysteine desulfurase IscS (404 aa).

Residues 75-76 (AT), N155, Q183, and 203-205 (SGH) contribute to the pyridoxal 5'-phosphate site. K206 bears the N6-(pyridoxal phosphate)lysine mark. T243 contributes to the pyridoxal 5'-phosphate binding site. Catalysis depends on C328, which acts as the Cysteine persulfide intermediate. Residue C328 participates in [2Fe-2S] cluster binding.

Belongs to the class-V pyridoxal-phosphate-dependent aminotransferase family. NifS/IscS subfamily. As to quaternary structure, homodimer. Forms a heterotetramer with IscU, interacts with other sulfur acceptors. Pyridoxal 5'-phosphate serves as cofactor.

The protein localises to the cytoplasm. The catalysed reaction is (sulfur carrier)-H + L-cysteine = (sulfur carrier)-SH + L-alanine. It participates in cofactor biosynthesis; iron-sulfur cluster biosynthesis. In terms of biological role, master enzyme that delivers sulfur to a number of partners involved in Fe-S cluster assembly, tRNA modification or cofactor biosynthesis. Catalyzes the removal of elemental sulfur and selenium atoms from cysteine and selenocysteine to produce alanine. Functions as a sulfur delivery protein for Fe-S cluster synthesis onto IscU, an Fe-S scaffold assembly protein, as well as other S acceptor proteins. Also functions as a selenium delivery protein in the pathway for the biosynthesis of selenophosphate. This is Cysteine desulfurase IscS from Salmonella gallinarum (strain 287/91 / NCTC 13346).